Consider the following 213-residue polypeptide: Charged multivesicular body protein 2b (213 aa).

Ala-2 is subject to N-acetylalanine. The stretch at 25 to 55 (QRAIIRDRAALEKQEKQLELEIKKMAKIGNK) forms a coiled coil. A compositionally biased stretch (low complexity) spans 179–194 (AKAPSAARSLPSASTS). Residues 179-199 (AKAPSAARSLPSASTSKATIS) form a disordered region. Ser-199 is modified (phosphoserine). The MIT-interacting motif motif lies at 201 to 211 (EEIERQLKALG).

This sequence belongs to the SNF7 family. Probable core component of the endosomal sorting required for transport complex III (ESCRT-III). ESCRT-III components are thought to multimerize to form a flat lattice on the perimeter membrane of the endosome. Several assembly forms of ESCRT-III may exist that interact and act sequentially. Interacts with CHMP2A. Interacts with VPS4A. Interacts with VPS4B; the interaction is direct. In terms of tissue distribution, in brain, it is expressed in all neuronal populations with a relatively enhanced expression in the hippocampus, frontal and temporal lobes and in both granule and Purkinje cells of the cerebellum. Not expressed in astrocytes or oligodendrocytes.

The protein localises to the cytoplasm. It localises to the cytosol. The protein resides in the late endosome membrane. In terms of biological role, probable core component of the endosomal sorting required for transport complex III (ESCRT-III) which is involved in multivesicular bodies (MVBs) formation and sorting of endosomal cargo proteins into MVBs. MVBs contain intraluminal vesicles (ILVs) that are generated by invagination and scission from the limiting membrane of the endosome and mostly are delivered to lysosomes enabling degradation of membrane proteins, such as stimulated growth factor receptors, lysosomal enzymes and lipids. The MVB pathway appears to require the sequential function of ESCRT-O, -I,-II and -III complexes. ESCRT-III proteins mostly dissociate from the invaginating membrane before the ILV is released. The ESCRT machinery also functions in topologically equivalent membrane fission events, such as the terminal stages of cytokinesis. ESCRT-III proteins are believed to mediate the necessary vesicle extrusion and/or membrane fission activities, possibly in conjunction with the AAA ATPase VPS4. The protein is Charged multivesicular body protein 2b (Chmp2b) of Mus musculus (Mouse).